The primary structure comprises 364 residues: Aminomethyltransferase (364 aa).

The protein belongs to the GcvT family. In terms of assembly, the glycine cleavage system is composed of four proteins: P, T, L and H.

It catalyses the reaction N(6)-[(R)-S(8)-aminomethyldihydrolipoyl]-L-lysyl-[protein] + (6S)-5,6,7,8-tetrahydrofolate = N(6)-[(R)-dihydrolipoyl]-L-lysyl-[protein] + (6R)-5,10-methylene-5,6,7,8-tetrahydrofolate + NH4(+). The glycine cleavage system catalyzes the degradation of glycine. The protein is Aminomethyltransferase of Escherichia coli (strain SMS-3-5 / SECEC).